The sequence spans 706 residues: Transferrin-binding protein B (706 aa).

The N-terminal stretch at 1–20 is a signal peptide; it reads MKHIPLTTLCVAISAVLLTA. Residue C21 is the site of N-palmitoyl cysteine attachment. The S-diacylglycerol cysteine moiety is linked to residue C21. 2 disordered regions span residues 26–92 and 384–412; these read GSNP…KEQV and GSAIASDKEKDSETKHPFTSDAKDRLEGG. Residues 42–51 are compositionally biased toward gly residues; it reads GNTGNTGNAG. Residues 389–410 are compositionally biased toward basic and acidic residues; sequence SDKEKDSETKHPFTSDAKDRLE.

The protein belongs to the TbpB family.

It is found in the cell outer membrane. The protein localises to the cell surface. Its function is as follows. Moraxella acquires iron by extracting it from serum transferrin (TF) in its human host. Acts as a transferrin receptor and is required for transferrin utilization. This chain is Transferrin-binding protein B, found in Moraxella catarrhalis (Branhamella catarrhalis).